The following is an 801-amino-acid chain: Growth-differentiation transition protein 7 (801 aa).

The signal sequence occupies residues 1–22; it reads MIKTILIKLILLVIFCYHFLFA.

Belongs to the GDT family.

Its subcellular location is the secreted. The polypeptide is Growth-differentiation transition protein 7 (gdt7) (Dictyostelium discoideum (Social amoeba)).